We begin with the raw amino-acid sequence, 7094 residues long: Replicase polyprotein 1ab (7094 aa).

The region spanning 54–196 (PENHVMVDCR…PWVMYLRKCG (143 aa)) is the CoV Nsp1 globular domain. One can recognise a BetaCoV Nsp1 C-terminal domain in the interval 216-246 (FKVEDAYDLVHDEPKGKFSKKAYALIRGYRG). The CoV Nsp2 N-terminal domain maps to 250-519 (LLYVDQYGCD…LICKALYLDY (270 aa)). 4 residues coordinate Zn(2+): Cys-392, Cys-397, Cys-413, and Cys-416. The C4 stretch occupies residues 392-416 (CEQDLCDFKGWVPGNMIDGFACTTC). In terms of domain architecture, CoV Nsp2 middle spans 524-713 (CGNLHQRELL…AQAFRSVAKV (190 aa)). Residues 733 to 851 (RRRICLSGSK…LDQAWRVPCA (119 aa)) enclose the CoV Nsp2 C-terminal domain. The Ubiquitin-like 1 domain occupies 853-966 (RRVTFKEQPT…LYCAFTAPED (114 aa)). The Peptidase C16 1 domain maps to 1036–1274 (DLESVIQDYE…IAQLYGSCIT (239 aa)). Catalysis depends on Cys-1074, which acts as the For PL1-PRO activity. Zn(2+)-binding residues include Cys-1151, Cys-1154, Cys-1177, and Cys-1179. Residues 1151-1179 (CIKCDLALKLKGLDAMFFYGDVVSHVCKC) form a C4-type 1 zinc finger. Residues His-1225 and Asp-1236 each act as for PL1-PRO activity in the active site. Positions 1275 to 1435 (PNVCFVKGDI…LISKCQITAV (161 aa)) constitute a Macro domain. Positions 1491 to 1563 (DDARTFVQSN…VAQIKALFLD (73 aa)) constitute a DPUP domain. The Ubiquitin-like 2 domain maps to 1562–1617 (LDKVDILLTVDGVNFTNRFVPVGESFGKSLGNVFCDGVNVTKHKCDINYKGKVFFQ). In terms of domain architecture, Peptidase C16 2 spans 1631–1892 (SSFNFDQKEL…KIEYNPDLSQ (262 aa)). The active-site For PL2-PRO activity is the Cys-1671. Residues Cys-1749, Cys-1751, Cys-1783, and Cys-1785 each coordinate Zn(2+). The C4-type 2 zinc finger occupies 1749-1785 (CKCGVKQEQRTGVDAVMHFGTLSREDLEIGYTVDCSC). Active-site for PL2-PRO activity residues include His-1828 and Asp-1842. The Nucleic acid-binding domain maps to 1906-2007 (IKAQFKTFEK…TYFNRPLLVD (102 aa)). Residues 2020 to 2169 (DDGGDISESD…ADNKVIYTTE (150 aa)) enclose the G2M domain. 3 helical membrane passes run 2138 to 2158 (ISACFNFIKWLFVLLFGWIKI), 2199 to 2219 (ACIIATIFLLWFNFIYANVIF), and 2227 to 2247 (IGFLPTFVGKIAQWIKSTFSL). An HD1 region spans residues 2138 to 2385 (ISACFNFIKW…ASFIKLFILF (248 aa)). In terms of domain architecture, 3Ecto spans 2235–2296 (GKIAQWIKST…AIDVVQYEAD (62 aa)). 2 cysteine pairs are disulfide-bonded: Cys-2251-Cys-2275 and Cys-2266-Cys-2272. 3 helical membrane-spanning segments follow: residues 2313-2333 (LIVSYALYTAWFYPLFALISI), 2343-2363 (LFMLSTLHWSVRLLVSLANML), and 2365-2385 (AHVFMRFYIIIASFIKLFILF). The segment at 2383–2473 (ILFRHVAYGC…ELKRPIQPTD (91 aa)) is Y1. The 368-residue stretch at 2383-2750 (ILFRHVAYGC…LTTPFSLKGG (368 aa)) folds into the CoV Nsp3 Y domain. Zn(2+) is bound by residues His-2387, Cys-2392, Cys-2397, Cys-2400, Cys-2433, His-2436, Cys-2440, and Cys-2443. A ZF1 region spans residues 2387–2400 (HVAYGCSKPGCLFC). The interval 2433–2443 (CSKHQWNCIDC) is ZF2. The Y2 stretch occupies residues 2474 to 2566 (VAYHTVTDVK…MVDKNLITTA (93 aa)). Positions 2474–2750 (VAYHTVTDVK…LTTPFSLKGG (277 aa)) are coV-Y. The interval 2567 to 2649 (NTGTSVTETM…DSVMSAVSAG (83 aa)) is Y3. The tract at residues 2650 to 2750 (LELTDESCNN…LTTPFSLKGG (101 aa)) is Y4. 7 helical membrane passes run 2752-2772 (VFSYFVYVCFLLSLVCFIGLW), 2824-2844 (STFGLSYYSNSMACPIVVAVV), 3009-3029 (VFDLIYQLFKGLAQPVDFLAL), 3031-3051 (ASSIAGAILAVIVVLVFYYLI), 3063-3083 (IVFVNVIVWCVNFMMLFVFQV), 3090-3110 (VYAICYFYATLYFPSEISVIM), and 3115-3135 (LVMYGTIMPLWFCLLYISVVV). Residues 2752–3135 (VFSYFVYVCF…FCLLYISVVV (384 aa)) are HD2. Positions 3149 to 3246 (LGTSVRSDGT…TASVSTSFLQ (98 aa)) constitute a Nsp4C domain. The Peptidase C30 domain maps to 3247 to 3549 (SGIVKMVNPT…YQQLAGIKLQ (303 aa)). Catalysis depends on for 3CL-PRO activity residues His-3287 and Cys-3391. Transmembrane regions (helical) follow at residues 3558–3578 (GIVCWIMASTFLFSCIITAFV), 3588–3608 (TNMLSITFCALCVISLAMLLV), 3614–3634 (YLTMYIIPVLFTLLYNNYLVV), 3657–3677 (TYTDEVIYGMLLLIGMVFVTL), 3684–3704 (LFSFIMFVGRVISVVSLWYMG), 3711–3731 (ILLMLASLFGTYTWTTALSMA), and 3755–3775 (IVLVCYLFIGYIISCYWGLFS). An HD3 region spans residues 3558 to 3775 (GIVCWIMAST…IISCYWGLFS (218 aa)). Positions 3837-3925 (SKLTDVKCAN…DYAKDNTVLQ (89 aa)) constitute a RdRp Nsp7 cofactor domain. A RdRp Nsp8 cofactor domain is found at 3926–4122 (ALQSEFVNMA…HNEVSATVLQ (197 aa)). The region spanning 4123 to 4232 (NNELMPAKLK…GTISSTVRLQ (110 aa)) is the Nsp9 ssRNA-binding domain. The ExoN/MTase coactivator domain occupies 4233–4370 (AGTATEYASN…CVSTDTTVQS (138 aa)). Positions 4306, 4309, 4315, 4322, 4348, 4351, 4359, and 4361 each coordinate Zn(2+). Zinc fingers lie at residues 4306 to 4322 (CIYCRARVEHPDVDGLC) and 4348 to 4361 (CQVCGFWRDGSCSC). The 256-residue stretch at 4375–4630 (FLNRVRGTSV…DCELYVNNAY (256 aa)) folds into the NiRAN domain. Residues Asn-4578 and Asp-4587 each contribute to the Mn(2+) site. Residues 4631-4729 (RLFDLVQYDF…MNMDVDTHRY (99 aa)) form the Nsp12 Interface domain. The Zn(2+) site is built by His-4660, Cys-4666, Cys-4671, Cys-4675, and Cys-4852. The 568-residue stretch at 4730–5297 (RLSLKDLLLY…NMYLRSAVMQ (568 aa)) folds into the Nsp12 RNA-dependent RNA polymerase domain. The interval 4732–4946 (SLKDLLLYAA…HQKCLKSIAA (215 aa)) is rdRp Fingers N-ter. Residues 4947-4985 (TRGVPVVIGTTKFYGGWDDMLRRLIKDVDNPVLMGWDYP) are rdRp Palm N-ter. A RdRp catalytic domain is found at 4977–5139 (PVLMGWDYPK…CYNSDYASKG (163 aa)). Residues 4986 to 5044 (KCDRAMPNILRIVSSLVLARKHEACCSQSDRFYRLANECAQVLSEIVMCGGCYYVKPGG) are rdRp Fingers C-ter. Residues His-5007, Cys-5010, and Cys-5011 each coordinate Zn(2+). Residues 5045–5180 (TSSGDATTAF…NNGPHEFCSQ (136 aa)) are rdRp Palm C-ter. Active-site residues include Ser-5124, Asp-5125, and Asp-5126. The segment at 5181-5297 (HTMLVKMDGD…NMYLRSAVMQ (117 aa)) is rdRp Thumb. The 113-residue stretch at 5298-5410 (SVGACVVCSS…DDFNRIASCK (113 aa)) folds into the CV ZBD domain. Zn(2+) is bound by residues Cys-5302, Cys-5305, Cys-5313, Cys-5316, Cys-5323, Cys-5326, His-5330, His-5336, Cys-5347, Cys-5352, Cys-5369, and His-5372. A (+)RNA virus helicase ATP-binding domain is found at 5553-5734 (SVLETFQNNV…MCCLGPDIFL (182 aa)). 5578-5585 (GPPGTGKS) contacts ATP. The 170-residue stretch at 5735–5904 (GTCYRCPKEI…VETRVQCSTN (170 aa)) folds into the (+)RNA virus helicase C-terminal domain. One can recognise an ExoN domain in the interval 5971 to 6186 (LFITKEEAVK…RCLAVYDCFC (216 aa)). Catalysis depends on residues Asp-5989, Glu-5991, and Glu-6090. Cys-6106, Cys-6109, Cys-6125, His-6128, His-6156, Cys-6160, and His-6163 together coordinate Zn(2+). Residues His-6167 and Asp-6172 contribute to the active site. Zn(2+) is bound at residue Cys-6178. The region spanning 6195-6421 (YPIISNELSI…NLWNTFTKLQ (227 aa)) is the N7-MTase domain. 6230–6236 (DIGNPKA) contacts S-adenosyl-L-methionine. Residues 6308–6322 (CNGGSLYVNKHAFHT) are gpppA-binding. 4 residues coordinate Zn(2+): Cys-6346, Cys-6367, Cys-6378, and His-6381. A Nsp15 N-terminal oligomerization domain is found at 6422 to 6482 (SLENVVYNLV…NVAVELFAKR (61 aa)). Residues 6483-6603 (SIRHHPELKL…FAVRKEGQDV (121 aa)) enclose the AV-Nsp11N/CoV-Nsp15M domain. In terms of domain architecture, NendoU spans 6653–6792 (TCRTDMEKDF…NDEKVMTFYP (140 aa)). Catalysis depends on residues His-6683, His-6698, Lys-6738, Lys-6841, Asp-6925, Lys-6965, and Glu-6998. The Nidovirus-type SAM-dependent 2'-O-MTase domain maps to 6797–7091 (ASDWKPGYSM…KEVFVGDSLV (295 aa)).

The protein belongs to the coronaviruses polyprotein 1ab family. In terms of assembly, interacts with host PHB and PHB2. Interacts with papain-like protease nsp3 and non-structural protein 6. As to quaternary structure, monomer. Homodimer. Only the homodimer shows catalytic activity. In terms of assembly, interacts with nsp8 and nsp12 to form the replication-transcription complex (RTC): nsp12, nsp7, two subunits of nsp8, and up to two subunits of nsp13. Interacts with nsp7, nsp13 and nsp12 to form the replication-transcription complex (RTC): nsp12, nsp7, two subunits of nsp8, and up to two subunits of nsp13. As to quaternary structure, interacts with nsp12. In terms of assembly, interacts with proofreading exoribonuclease nsp14 and 2'-O-methyltransferase nsp16; these interactions enhance nsp14 and nsp16 enzymatic activities. Interacts with nsp7 and nsp8 to form the replication-transcription complex (RTC): nsp12, nsp7, two subunits of nsp8, and up to two subunits of nsp13. Interacts with nsp9. As to quaternary structure, interacts with nsp8 to form the replication-transcription complex (RTC): nsp12, nsp7, two subunits of nsp8, and up to two subunits of nsp13. Mn(2+) serves as cofactor. Requires Mg(2+) as cofactor. Specific enzymatic cleavages in vivo by its own proteases yield mature proteins. 3CL-PRO and PL-PRO proteinases are autocatalytically processed.

It localises to the host membrane. The protein resides in the host cytoplasm. The protein localises to the host perinuclear region. It is found in the host endoplasmic reticulum-Golgi intermediate compartment. The catalysed reaction is RNA(n) + a ribonucleoside 5'-triphosphate = RNA(n+1) + diphosphate. It carries out the reaction ATP + H2O = ADP + phosphate + H(+). The enzyme catalyses Thiol-dependent hydrolysis of ester, thioester, amide, peptide and isopeptide bonds formed by the C-terminal Gly of ubiquitin (a 76-residue protein attached to proteins as an intracellular targeting signal).. It catalyses the reaction a 5'-end (N(7)-methyl 5'-triphosphoguanosine)-ribonucleoside in mRNA + S-adenosyl-L-methionine = a 5'-end (N(7)-methyl 5'-triphosphoguanosine)-(2'-O-methyl-ribonucleoside) in mRNA + S-adenosyl-L-homocysteine + H(+). The catalysed reaction is uridylyl-uridylyl-ribonucleotide-RNA = a 3'-end uridylyl-2',3'-cyclophospho-uridine-RNA + a 5'-end dephospho-ribonucleoside-RNA. It carries out the reaction a 5'-end diphospho-ribonucleoside in mRNA + GTP + H(+) = a 5'-end (5'-triphosphoguanosine)-ribonucleoside in mRNA + diphosphate. The enzyme catalyses a 5'-end (5'-triphosphoguanosine)-ribonucleoside in mRNA + S-adenosyl-L-methionine = a 5'-end (N(7)-methyl 5'-triphosphoguanosine)-ribonucleoside in mRNA + S-adenosyl-L-homocysteine. Its function is as follows. The replicase polyprotein of coronaviruses is a multifunctional protein: it contains the activities necessary for the transcription of negative stranded RNA, leader RNA, subgenomic mRNAs and progeny virion RNA as well as proteinases responsible for the cleavage of the polyprotein into functional products. In terms of biological role, inhibits host translation by interacting with the 40S ribosomal subunit. The nsp1-40S ribosome complex further induces an endonucleolytic cleavage near the 5'UTR of host mRNAs, targeting them for degradation. Viral mRNAs are not susceptible to nsp1-mediated endonucleolytic RNA cleavage thanks to the presence of a 5'-end leader sequence and are therefore protected from degradation. By suppressing host gene expression, nsp1 facilitates efficient viral gene expression in infected cells and evasion from host immune response. May play a role in the modulation of host cell survival signaling pathway by interacting with host PHB and PHB2. Indeed, these two proteins play a role in maintaining the functional integrity of the mitochondria and protecting cells from various stresses. Functionally, responsible for the cleavages located at the N-terminus of the replicase polyprotein. In addition, PL-PRO possesses a deubiquitinating/deISGylating activity and processes both 'Lys-48'- and 'Lys-63'-linked polyubiquitin chains from cellular substrates. Participates together with nsp4 in the assembly of virally-induced cytoplasmic double-membrane vesicles necessary for viral replication. Antagonizes innate immune induction of type I interferon by blocking the phosphorylation, dimerization and subsequent nuclear translocation of host IRF3. Also prevents host NF-kappa-B signaling. Its function is as follows. Participates in the assembly of virally-induced cytoplasmic double-membrane vesicles necessary for viral replication. In terms of biological role, cleaves the C-terminus of replicase polyprotein at 11 sites. Recognizes substrates containing the core sequence [ILMVF]-Q-|-[SGACN]. Also able to bind an ADP-ribose-1''-phosphate (ADRP). Plays a role in the initial induction of autophagosomes from host endoplasmic reticulum. Later, limits the expansion of these phagosomes that are no longer able to deliver viral components to lysosomes. Functionally, forms a hexadecamer with nsp8 (8 subunits of each) that may participate in viral replication by acting as a primase. Alternatively, may synthesize substantially longer products than oligonucleotide primers. Its function is as follows. Forms a hexadecamer with nsp7 (8 subunits of each) that may participate in viral replication by acting as a primase. Alternatively, may synthesize substantially longer products than oligonucleotide primers. In terms of biological role, forms a primer, NSP9-pU, which is utilized by the polymerase for the initiation of RNA chains. Interacts with ribosome signal recognition particle RNA (SRP). Together with NSP8, suppress protein integration into the cell membrane, thereby disrupting host immune defenses. Plays a pivotal role in viral transcription by stimulating both nsp14 3'-5' exoribonuclease and nsp16 2'-O-methyltransferase activities. Therefore plays an essential role in viral mRNAs cap methylation. Functionally, RNA-directed RNA polymerase that catalyzes the transcription of viral genomic and subgenomic RNAs. Acts in complex with nsp7 and nsp8 to transcribe both the minus and positive strands of genomic RNA. The kinase-like NiRAN domain of NSP12 attaches one or more nucleotides to the amino terminus of NSP9, forming a covalent RNA-protein intermediate that serves as transcription/replication primer. Subgenomic RNAs (sgRNAs) are formed by discontinuous transcription: The polymerase has the ability to pause at transcription-regulating sequences (TRS) and jump to the leader TRS, resulting in a major deletion. This creates a series of subgenomic RNAs that are replicated, transcribed and translated. In addition, Nsp12 is a subunit of the viral RNA capping enzyme that catalyzes the RNA guanylyltransferase reaction for genomic and sub-genomic RNAs. Subsequently, the NiRAN domain transfers RNA to GDP, and forms the core cap structure GpppA-RNA. Its function is as follows. Multi-functional protein with a zinc-binding domain in N-terminus displaying RNA and DNA duplex-unwinding activities with 5' to 3' polarity. Activity of helicase is dependent on magnesium. In terms of biological role, plays a role in viral RNA synthesis through two distinct activities. The N7-guanine methyltransferase activity plays a role in the formation of the cap structure GpppA-RNA. The proofreading exoribonuclease reduces the sensitivity of the virus to RNA mutagens during replication. This activity acts on both ssRNA and dsRNA in a 3'-5' direction. Plays a role in viral transcription/replication and prevents the simultaneous activation of host cell dsRNA sensors, such as MDA5/IFIH1, OAS, and PKR. Acts by degrading the 5'-polyuridines generated during replication of the poly(A) region of viral genomic and subgenomic RNAs. Catalyzes a two-step reaction in which a 2'3'-cyclic phosphate (2'3'-cP) is first generated by 2'-O transesterification, which is then hydrolyzed to a 3'-phosphate (3'-P). If not degraded, poly(U) RNA would hybridize with poly(A) RNA tails and activate host dsRNA sensors. Functionally, methyltransferase that mediates mRNA cap 2'-O-ribose methylation to the 5'-cap structure of viral mRNAs. N7-methyl guanosine cap is a prerequisite for binding of nsp16. Therefore plays an essential role in viral mRNAs cap methylation which is essential to evade immune system. The protein is Replicase polyprotein 1ab (rep) of Bos taurus (Bovine).